Consider the following 541-residue polypeptide: Thioredoxin reductase (541 aa).

Residues 51–52 (PG), 71–74 (DYVK), 87–88 (TC), 92–96 (GCVPK), Ala161, Asp357, and 364–366 (ELA) each bind FAD. A disulfide bond links Cys88 and Cys93. The interval 438–452 (HRQKHIRAQKDEYDL) is loop important for the interaction with TRX1. His509 contributes to the FAD binding site. The active-site Proton acceptor is the His509. A disulfide bond links Cys535 and Cys540.

The protein belongs to the class-I pyridine nucleotide-disulfide oxidoreductase family. In terms of assembly, homodimer. The cofactor is FAD.

It localises to the cytoplasm. It catalyses the reaction [thioredoxin]-dithiol + NADP(+) = [thioredoxin]-disulfide + NADPH + H(+). Catalyzes the transfer of electrons from NADPH to thioredoxins TRX1, TRX2 and TRX3, which in turn act as reductants of disulfide containing proteins. Able to reduce nitroglutathione (GSNO), a compound involved in the transport of nitric oxide (NO); however, TRX1 is more efficient in reducing GSNO. Has no catalytic activity towards oxidized glutathione (GSSG). The chain is Thioredoxin reductase from Plasmodium falciparum (isolate FCH-5).